Here is a 323-residue protein sequence, read N- to C-terminus: MSNIKIAGIGAYLPSLVVTNDRISEFVETSDEWIVQRTGMRERRISEGENTSDISTKAAKLALERAGIDAKDLELIIVATISPDMFIPSVACLVQSNLDASKAACFDISVACSGFVYGLETAKALMMSMNYKNALVVGAEVLSKVTDWTDRSTCILFGDGAGAAVLKRDEAPGIIKSYLRADGKKGEALTIGATDFDTPFSKEKKLAKRTIDMNGREILRFAVSAIDEAVTEVMKDTNVSFDDIKYIVPHQANYRIIKLAAEKLKLSEDKFYLNLEKVGNTSAATVPIALNEMYEKGLLNKGDKIILVAFGGGLTYAATLLEW.

Active-site residues include Cys-112 and His-250. Residues 251–255 (QANYR) form an ACP-binding region. The active site involves Asn-280.

The protein belongs to the thiolase-like superfamily. FabH family. As to quaternary structure, homodimer.

The protein resides in the cytoplasm. It carries out the reaction malonyl-[ACP] + acetyl-CoA + H(+) = 3-oxobutanoyl-[ACP] + CO2 + CoA. The protein operates within lipid metabolism; fatty acid biosynthesis. In terms of biological role, catalyzes the condensation reaction of fatty acid synthesis by the addition to an acyl acceptor of two carbons from malonyl-ACP. Catalyzes the first condensation reaction which initiates fatty acid synthesis and may therefore play a role in governing the total rate of fatty acid production. Possesses both acetoacetyl-ACP synthase and acetyl transacylase activities. Its substrate specificity determines the biosynthesis of branched-chain and/or straight-chain of fatty acids. This Clostridium beijerinckii (strain ATCC 51743 / NCIMB 8052) (Clostridium acetobutylicum) protein is Beta-ketoacyl-[acyl-carrier-protein] synthase III.